The primary structure comprises 561 residues: Glutamate--tRNA ligase (561 aa).

The 'HIGH' region signature appears at 107-117 (PNPSGPLHLGH).

This sequence belongs to the class-I aminoacyl-tRNA synthetase family. Glutamate--tRNA ligase type 2 subfamily.

Its subcellular location is the cytoplasm. The catalysed reaction is tRNA(Glu) + L-glutamate + ATP = L-glutamyl-tRNA(Glu) + AMP + diphosphate. Catalyzes the attachment of glutamate to tRNA(Glu) in a two-step reaction: glutamate is first activated by ATP to form Glu-AMP and then transferred to the acceptor end of tRNA(Glu). The chain is Glutamate--tRNA ligase from Methanoculleus marisnigri (strain ATCC 35101 / DSM 1498 / JR1).